Here is a 661-residue protein sequence, read N- to C-terminus: FAST kinase domain-containing protein 3, mitochondrial (661 aa).

The region spanning 592–650 is the RAP domain; that stretch reads VALCIDGPQRFCLDSKHLLGKEATKQRHLRLLGYQVVQLPYHELELLTSRLELVDYLQR.

The protein belongs to the FAST kinase family. As to expression, expression detected in spleen, testis, colon, heart, smooth muscle, kidney, brain, lung, liver, brown and white adipose tissue with highest expression in testis and smooth muscle.

It is found in the mitochondrion. Required for normal mitochondrial respiration. Increases steady-state levels and half-lives of a subset of mature mitochondrial mRNAs MT-ND2, MT-ND3, MT-CYTB, MT-CO2, and MT-ATP8/6. Promotes MT-CO1 mRNA translation and increases mitochondrial complex IV assembly and activity. This Mus musculus (Mouse) protein is FAST kinase domain-containing protein 3, mitochondrial (Fastkd3).